The chain runs to 342 residues: Phosphate acyltransferase (342 aa).

This sequence belongs to the PlsX family. Homodimer. Probably interacts with PlsY.

Its subcellular location is the cytoplasm. It carries out the reaction a fatty acyl-[ACP] + phosphate = an acyl phosphate + holo-[ACP]. The protein operates within lipid metabolism; phospholipid metabolism. Its function is as follows. Catalyzes the reversible formation of acyl-phosphate (acyl-PO(4)) from acyl-[acyl-carrier-protein] (acyl-ACP). This enzyme utilizes acyl-ACP as fatty acyl donor, but not acyl-CoA. The polypeptide is Phosphate acyltransferase (Shewanella sp. (strain ANA-3)).